The sequence spans 353 residues: MSEPLKPRIDFAEPLKEEPTSAFKAQQTFSEAESRTFAPAAIDERPEDEGVAEAAVDAALRPKRSLWRKMVMGGLALFGASVVGQGVQWTMNAWQTQDWVALGGCAAGALIVGAGVGSVVTEWRRLWRLRQRAHERDEARELLHSHSVGKGRAFCEKLAQQAGIDQSHPALQRWYAAIHETQNDREIVGLYAHLVQPVLDAQARREISRFAAESTLMIAVSPLALVDMAFIAWRNLRLINRIATLYGIELGYYSRLRLFRLVLLNIAFAGASELMREVGMDWMSQDLAARLSTRAAQGIGAGLLTARLGIKAMELCRPLPWIDNDKPRLGDFRRQLIGQLKETLQKSKSSPEK.

Basic and acidic residues predominate over residues 1–19 (MSEPLKPRIDFAEPLKEEP). A disordered region spans residues 1–35 (MSEPLKPRIDFAEPLKEEPTSAFKAQQTFSEAESR). 3 helical membrane passes run 70–90 (MVMGGLALFGASVVGQGVQWT), 100–120 (VALGGCAAGALIVGAGVGSVV), and 213–233 (ESTLMIAVSPLALVDMAFIAW).

Belongs to the UPF0283 family.

The protein localises to the cell inner membrane. The protein is UPF0283 membrane protein YcjF of Salmonella paratyphi B (strain ATCC BAA-1250 / SPB7).